The following is a 1121-amino-acid chain: Potassium channel subfamily U member 1 (1121 aa).

The Extracellular portion of the chain corresponds to 1-24 (MSQTLLDSLNQKELTETSCTIEIQ). Residues 25–45 (AAFILSSLATFFGGLIILFLF) form a helical membrane-spanning segment. Topologically, residues 46-101 (RIALKSSRSWKYVKGPRGLLELFSSRRIEANPLRKLYFHGVFRQRIEMLLSAQTVV) are cytoplasmic. The chain crosses the membrane as a helical span at residues 102–122 (GQVLVILVFVLSIGSLVIYFI). At 123–137 (NSMDPVRRCSSYEDK) the chain is on the extracellular side. The helical transmembrane segment at 138–158 (IVHVDLSFNAFFSFYFGLRFW) threads the bilayer. The Cytoplasmic portion of the chain corresponds to 159–165 (AAEDKIK). Residues 166 to 186 (FWLEMNSIVDIFTIPPTFISY) form a helical membrane-spanning segment. Residues 187 to 188 (YL) are Extracellular-facing. A helical; Voltage-sensor transmembrane segment spans residues 189 to 209 (KSNWLGLRFLRALRLLELPKI). Residues 210–226 (LQILQVIKTSNSVKLSK) are Cytoplasmic-facing. The chain crosses the membrane as a helical span at residues 227 to 247 (LLSIVISTWFTAAGFLHLVEN). The Extracellular portion of the chain corresponds to 248-259 (SGDPWLNGRNSQ). The pore-forming intramembrane region spans 260-282 (TMSYFESIYLVTATMSTVGFGDV). Residues 276–279 (TVGF) carry the Selectivity for potassium motif. Residues 283-290 (VAKTSLGR) are Extracellular-facing. Residues 291 to 311 (IFIVFFTLGSLILFANYIPEM) form a helical membrane-spanning segment. Residues 312-1121 (VELFSTRKKY…LDASDIVQEK (810 aa)) lie on the Cytoplasmic side of the membrane. RCK N-terminal domains follow at residues 331-473 (KKFI…DNIL) and 718-889 (QNHI…DGML). 2 disordered regions span residues 836–858 (SPTPGSSKSEVKPSSAFDSKERK) and 1052–1076 (DSSPSIQAQNNSTNATTPLAQGSNF).

This sequence belongs to the potassium channel family. Calcium-activated (TC 1.A.1.3) subfamily. KCa5.1/KCNU1 sub-subfamily. Homotetramer; which constitutes the calcium-activated potassium channel. Interact with LRRC52; this interaction changes some channel gating properties, such as shifting gating to more negative potentials at a given pH. Testis-specific. Mainly expressed in spermatocytes. As to expression, expressed in testis, brain, eye and kidney.

It localises to the cell membrane. Its subcellular location is the cytoplasm. It catalyses the reaction K(+)(in) = K(+)(out). Its activity is regulated as follows. Regulated by changes in cytosolic pH; activated by alkalization. In contrast to human KCNU1 is not activated by Ca(2+) or Mg(2+). The auxiliary subunit LRRC52 shifts the activation of KCNU1 to more negative potentials at a given pH. Functionally, testis-specific potassium channel activated by both intracellular pH and membrane voltage that mediates export of K(+). Represents the primary spermatozoan K(+) current. The channel underlies a pH-triggered membrane hyperpolarization during the process of sperm capacitation, as sperm encounter the alkaline environment near the ovum in the female reproductive tract, thereby playing an essential for male fertility. The sequence is that of Potassium channel subfamily U member 1 (Kcnu1) from Mus musculus (Mouse).